We begin with the raw amino-acid sequence, 407 residues long: Putative F-box protein At5g60560 (407 aa).

Residues 2–49 (TMMSDLSEDLVEEILCRVSITSLGAVRSTCKGWYVLSKTRVLCKAETK) enclose the F-box domain.

This chain is Putative F-box protein At5g60560, found in Arabidopsis thaliana (Mouse-ear cress).